The chain runs to 135 residues: Basic phospholipase A2 6 (135 aa).

7 disulfide bridges follow: Cys-28–Cys-87, Cys-42–Cys-134, Cys-44–Cys-60, Cys-59–Cys-115, Cys-66–Cys-108, Cys-76–Cys-101, and Cys-94–Cys-106. Ca(2+)-binding residues include Tyr-43, Gly-45, and Gly-47. His-63 is a catalytic residue. Residue Asp-64 coordinates Ca(2+). Residue Asp-109 is part of the active site.

It belongs to the phospholipase A2 family. Group I subfamily. D49 sub-subfamily. The cofactor is Ca(2+). In terms of tissue distribution, expressed by the venom gland.

Its subcellular location is the secreted. It carries out the reaction a 1,2-diacyl-sn-glycero-3-phosphocholine + H2O = a 1-acyl-sn-glycero-3-phosphocholine + a fatty acid + H(+). In terms of biological role, snake venom phospholipase A2 (PLA2) that inhibits neuromuscular transmission by blocking acetylcholine release from the nerve termini. PLA2 catalyzes the calcium-dependent hydrolysis of the 2-acyl groups in 3-sn-phosphoglycerides. Very weakly suppress the acetylcholine (ACh)-evoked current mediated by alpha-7-similar nAChRs in L.stagnalis neurons. This is Basic phospholipase A2 6 from Bungarus fasciatus (Banded krait).